Reading from the N-terminus, the 323-residue chain is uncharacterized protein (323 aa).

Residues methionine 1 to alanine 142 enclose the TIR domain.

This is an uncharacterized protein from Sinorhizobium fredii (strain NBRC 101917 / NGR234).